Here is a 274-residue protein sequence, read N- to C-terminus: NH(3)-dependent NAD(+) synthetase (274 aa).

46–53 (GISGGQDS) contacts ATP. D52 lines the Mg(2+) pocket. R140 provides a ligand contact to deamido-NAD(+). ATP is bound at residue T160. Residue E165 coordinates Mg(2+). 2 residues coordinate deamido-NAD(+): K173 and D180. ATP contacts are provided by K189 and T211. 260–261 (HK) contributes to the deamido-NAD(+) binding site.

It belongs to the NAD synthetase family. As to quaternary structure, homodimer.

The enzyme catalyses deamido-NAD(+) + NH4(+) + ATP = AMP + diphosphate + NAD(+) + H(+). Its pathway is cofactor biosynthesis; NAD(+) biosynthesis; NAD(+) from deamido-NAD(+) (ammonia route): step 1/1. Its function is as follows. Catalyzes the ATP-dependent amidation of deamido-NAD to form NAD. Uses ammonia as a nitrogen source. The chain is NH(3)-dependent NAD(+) synthetase from Pectobacterium carotovorum subsp. carotovorum (strain PC1).